The primary structure comprises 599 residues: DNA primase (599 aa).

The CHC2-type zinc-finger motif lies at 40-64 (CPFHGENTPSFSVSPDKQLYHCFGC). Residues 259–342 (NEAVLFEGYV…KVAMIPDGLD (84 aa)) enclose the Toprim domain. The Mg(2+) site is built by E265, D309, and D311.

Belongs to the DnaG primase family. Monomer. Interacts with DnaB. Requires Zn(2+) as cofactor. Mg(2+) serves as cofactor.

It catalyses the reaction ssDNA + n NTP = ssDNA/pppN(pN)n-1 hybrid + (n-1) diphosphate.. Functionally, RNA polymerase that catalyzes the synthesis of short RNA molecules used as primers for DNA polymerase during DNA replication. The chain is DNA primase from Halalkalibacterium halodurans (strain ATCC BAA-125 / DSM 18197 / FERM 7344 / JCM 9153 / C-125) (Bacillus halodurans).